The primary structure comprises 225 residues: Cell wall mannoprotein CIS3 (225 aa).

A signal peptide spans 1-21 (MQFKNVALAASVAALSATASA). The propeptide occupies 22 to 64 (EGYTPGEPWSTLTPTGSISCGAAEYTTTFGIAVQAITSSKAKR). The PIR1/2/3 repeat unit spans residues 65 to 82 (DVISQIGDGQVQATSAAA). O-linked (Man) serine glycosylation occurs at Ser-68. Thr-78 carries O-linked (Man) threonine glycosylation. Polar residues predominate over residues 78–92 (TSAAATDSQVQASST). Positions 78–128 (TSAAATDSQVQASSTATPTSSEKISSSASKTSSTNATSSSCATPSLKDSSC) are disordered. The segment covering 93–122 (ATPTSSEKISSSASKTSSTNATSSSCATPS) has biased composition (low complexity). O-linked (Man) serine glycosylation is found at Ser-102, Ser-103, Ser-104, and Ser-106. Thr-108 carries O-linked (Man) threonine glycosylation. Ser-109 carries an O-linked (Man) serine glycan. 2 O-linked (Man) threonine glycosylation sites follow: Thr-111 and Thr-114. Ser-115 and Ser-116 each carry an O-linked (Man) serine glycan.

It belongs to the PIR protein family. In terms of processing, covalently linked to beta-1,3-glucan of the inner cell wall layer via an alkali-sensitive ester linkage between the gamma-carboxyl group of glutamic acid, arising from Gln-74 within the PIR1/2/3 repeat, and hydroxyl groups of glucoses of beta-1,3-glucan chains. Post-translationally, extensively O-mannosylated.

Its subcellular location is the secreted. It localises to the cell wall. Its function is as follows. Component of the outer cell wall layer. Required for stability of the cell wall and for optimal growth. Required for resistance against several antifungal and cell wall-perturbing agents. This Saccharomyces cerevisiae (strain AWRI1631) (Baker's yeast) protein is Cell wall mannoprotein CIS3 (CIS3).